Reading from the N-terminus, the 966-residue chain is Collagen alpha-1(I) chain (966 aa).

The segment at 1–966 is disordered; sequence SYGYDEKSAG…PGPPGPPGPP (966 aa). An Allysine modification is found at Lys-7. Residue Ser-8 is modified to Phosphoserine. Pro-27, Pro-30, Pro-32, Pro-41, Pro-44, Pro-47, Pro-61, Pro-76, Pro-82, Pro-91, and Pro-97 each carry 4-hydroxyproline. The segment covering 64–78 has biased composition (basic and acidic residues); that stretch reads NGDDGEAGKPGRPGE. Position 100 is a 5-hydroxylysine; alternate (Lys-100). An O-linked (Gal...) hydroxylysine; alternate glycan is attached at Lys-100. Ser-106 bears the Phosphoserine mark. Residues 114 to 130 show a composition bias toward low complexity; the sequence is DAGPAGPKGEPGSPGEN. Pro-124, Pro-127, Pro-133, Pro-142, Pro-148, Pro-169, Pro-178, Pro-181, Pro-208, Pro-211, Pro-223, Pro-229, Pro-238, Pro-244, Pro-247, and Pro-262 each carry 4-hydroxyproline. A compositionally biased stretch (low complexity) spans 148–166; that stretch reads PGASGPAGARGNDGATGAA. Over residues 168-180 the composition is skewed to pro residues; that stretch reads PPGPTGPAGPPGF. The segment covering 214–253 has biased composition (low complexity); sequence AGAAGPAGNPGADGQPGAKGANGAPGIAGAPGFPGARGPS. Lys-265 carries the post-translational modification 5-hydroxylysine. 4-hydroxyproline is present on residues Pro-271, Pro-274, Pro-286, Pro-295, Pro-310, Pro-316, Pro-325, and Pro-331. The span at 320–329 shows a compositional bias: gly residues; it reads GERGGPGSRG. Residue Lys-340 is modified to 5-hydroxylysine. Residues Pro-349, Pro-358, Pro-364, Pro-370, Pro-379, Pro-382, Pro-391, Pro-400, Pro-406, Pro-418, Pro-427, Pro-436, Pro-439, Pro-457, Pro-475, Pro-481, Pro-487, Pro-493, Pro-499, Pro-505, Pro-517, Pro-526, Pro-538, Pro-542, Pro-548, Pro-554, and Pro-563 each carry the 4-hydroxyproline modification. Low complexity predominate over residues 373 to 399; that stretch reads KGLTGSPGSPGPDGKTGPPGPAGQDGR. Residues 408 to 427 show a composition bias toward low complexity; the sequence is ARGQAGVMGFPGPKGAAGEP. Low complexity predominate over residues 469 to 496; the sequence is QGPAGSPGFQGLPGPAGPPGEAGKPGEQ. Lys-575 is modified (5-hydroxylysine). Residues Pro-581, Pro-596, and Pro-602 each carry the 4-hydroxyproline modification. Low complexity predominate over residues 608 to 622; the sequence is SGPSGPAGPTGARGA. Ser-611 bears the Phosphoserine mark. 4-hydroxyproline is present on residues Pro-623, Pro-629, Pro-632, Pro-641, Pro-647, Pro-665, Pro-674, and Pro-683. A compositionally biased stretch (low complexity) spans 635 to 662; sequence AGFAGPPGADGQPGAKGEPGDAGAKGDA. A compositionally biased stretch (pro residues) spans 664-676; the sequence is PPGPAGPTGPPGP. At Lys-686 the chain carries 5-hydroxylysine. A compositionally biased stretch (low complexity) spans 691-707; sequence SAGPPGATGFPGAAGRV. A 4-hydroxyproline mark is found at Pro-695 and Pro-701. Pro-709 is subject to 3-hydroxyproline. Pro-710, Pro-719, Pro-722, Pro-746, Pro-755, Pro-773, Pro-782, Pro-785, Pro-791, Pro-806, Pro-812, Pro-818, Pro-826, and Pro-832 each carry 4-hydroxyproline. Positions 736–755 are enriched in low complexity; it reads ETGPAGEKGSPGADGPAGAP. Residues 805–815 are compositionally biased toward pro residues; sequence PPGPVGPPGLA. Over residues 824–835 the composition is skewed to gly residues; the sequence is EGPGAEGSPGRG. Low complexity predominate over residues 852-866; sequence AGPAGARGPAGPQGP. Positions 867–881 are enriched in basic and acidic residues; the sequence is RGDKGETGEQGDRGI. The residue at position 870 (Lys-870) is a 5-hydroxylysine. Residue Lys-882 is modified to 5-hydroxylysine; alternate. The O-linked (Gal...) hydroxylysine; alternate glycan is linked to Lys-882. Pro-897, Pro-900, Pro-918, and Pro-933 each carry 4-hydroxyproline. The span at 900-933 shows a compositional bias: low complexity; it reads PGEQGPSGASGPAGPRGPPGSAGSPGKDGLNGLP. Pro-938 is subject to 3-hydroxyproline. Pro-939 carries the 4-hydroxyproline modification. Positions 951 to 966 are enriched in pro residues; that stretch reads VGPPGPPGPPGPPGPP. Pro-953 carries the 3-hydroxyproline modification. Position 954 is a 4-hydroxyproline (Pro-954). Pro-956 is modified (3-hydroxyproline). Pro-957 carries the 4-hydroxyproline modification. Pro-959 is modified (3-hydroxyproline). 3 positions are modified to 4-hydroxyproline: Pro-960, Pro-963, and Pro-966.

It belongs to the fibrillar collagen family. As to quaternary structure, trimers of one alpha 2(I) and two alpha 1(I) chains. Contains mostly 4-hydroxyproline. Proline residues at the third position of the tripeptide repeating unit (G-X-Y) are hydroxylated in some or all of the chains. In terms of processing, contains 3-hydroxyproline at a few sites. This modification occurs on the first proline residue in the sequence motif Gly-Pro-Hyp, where Hyp is 4-hydroxyproline. Post-translationally, lysine residues at the third position of the tripeptide repeating unit (G-X-Y) are 5-hydroxylated in some or all of the chains. O-glycosylated on hydroxylated lysine residues. The O-linked glycan consists of a Glc-Gal disaccharide. As to expression, expressed in bones.

Its subcellular location is the secreted. It is found in the extracellular space. The protein localises to the extracellular matrix. Functionally, type I collagen is a member of group I collagen (fibrillar forming collagen). This Bradypus variegatus (Brown-throated three-fingered sloth) protein is Collagen alpha-1(I) chain.